The primary structure comprises 628 residues: Monoterpene synthase like 2, chloroplastic (628 aa).

Residues Asp379, Asp383, and Asp531 each coordinate Mg(2+). The short motif at 379–383 (DDIYD) is the DDXXD motif element.

It belongs to the terpene synthase family. Tpsd subfamily. Mg(2+) is required as a cofactor. Mn(2+) serves as cofactor.

It localises to the plastid. Its subcellular location is the chloroplast. It functions in the pathway terpene metabolism; oleoresin biosynthesis. Its pathway is secondary metabolite biosynthesis; terpenoid biosynthesis. Functionally, monoterpene synthase (TPS) involved in the biosynthesis of monoterpene natural products included in conifer oleoresin secretions and volatile emissions; these compounds contribute to biotic and abiotic stress defense against herbivores and pathogens. The polypeptide is Monoterpene synthase like 2, chloroplastic (Pinus banksiana (Jack pine)).